We begin with the raw amino-acid sequence, 446 residues long: Phosphoglucosamine mutase (446 aa).

Catalysis depends on Ser101, which acts as the Phosphoserine intermediate. Residues Ser101, Asp240, Asp242, and Asp244 each contribute to the Mg(2+) site. A Phosphoserine modification is found at Ser101.

The protein belongs to the phosphohexose mutase family. Mg(2+) is required as a cofactor. In terms of processing, activated by phosphorylation.

The enzyme catalyses alpha-D-glucosamine 1-phosphate = D-glucosamine 6-phosphate. In terms of biological role, catalyzes the conversion of glucosamine-6-phosphate to glucosamine-1-phosphate. This Pseudomonas entomophila (strain L48) protein is Phosphoglucosamine mutase.